The sequence spans 267 residues: Malonyl-[acyl-carrier protein] O-methyltransferase (267 aa).

The protein belongs to the methyltransferase superfamily.

The catalysed reaction is malonyl-[ACP] + S-adenosyl-L-methionine = malonyl-[ACP] methyl ester + S-adenosyl-L-homocysteine. It participates in cofactor biosynthesis; biotin biosynthesis. Functionally, converts the free carboxyl group of a malonyl-thioester to its methyl ester by transfer of a methyl group from S-adenosyl-L-methionine (SAM). It allows to synthesize pimeloyl-ACP via the fatty acid synthetic pathway. This chain is Malonyl-[acyl-carrier protein] O-methyltransferase, found in Yersinia pestis.